We begin with the raw amino-acid sequence, 408 residues long: Tryptophan synthase beta chain (408 aa).

K103 is subject to N6-(pyridoxal phosphate)lysine.

The protein belongs to the TrpB family. In terms of assembly, tetramer of two alpha and two beta chains. Pyridoxal 5'-phosphate serves as cofactor.

It carries out the reaction (1S,2R)-1-C-(indol-3-yl)glycerol 3-phosphate + L-serine = D-glyceraldehyde 3-phosphate + L-tryptophan + H2O. It participates in amino-acid biosynthesis; L-tryptophan biosynthesis; L-tryptophan from chorismate: step 5/5. In terms of biological role, the beta subunit is responsible for the synthesis of L-tryptophan from indole and L-serine. The chain is Tryptophan synthase beta chain from Koribacter versatilis (strain Ellin345).